A 274-amino-acid polypeptide reads, in one-letter code: 2,3,4,5-tetrahydropyridine-2,6-dicarboxylate N-succinyltransferase (274 aa).

Positions 104 and 141 each coordinate substrate.

It belongs to the transferase hexapeptide repeat family. In terms of assembly, homotrimer.

The protein resides in the cytoplasm. It carries out the reaction (S)-2,3,4,5-tetrahydrodipicolinate + succinyl-CoA + H2O = (S)-2-succinylamino-6-oxoheptanedioate + CoA. Its pathway is amino-acid biosynthesis; L-lysine biosynthesis via DAP pathway; LL-2,6-diaminopimelate from (S)-tetrahydrodipicolinate (succinylase route): step 1/3. In Salmonella typhi, this protein is 2,3,4,5-tetrahydropyridine-2,6-dicarboxylate N-succinyltransferase.